Here is a 301-residue protein sequence, read N- to C-terminus: Ribosomal RNA small subunit methyltransferase H (301 aa).

S-adenosyl-L-methionine-binding positions include 25–27, D45, F72, D94, and Q101; that span reads GGH.

It belongs to the methyltransferase superfamily. RsmH family.

It is found in the cytoplasm. It catalyses the reaction cytidine(1402) in 16S rRNA + S-adenosyl-L-methionine = N(4)-methylcytidine(1402) in 16S rRNA + S-adenosyl-L-homocysteine + H(+). Its function is as follows. Specifically methylates the N4 position of cytidine in position 1402 (C1402) of 16S rRNA. In Methylococcus capsulatus (strain ATCC 33009 / NCIMB 11132 / Bath), this protein is Ribosomal RNA small subunit methyltransferase H.